The sequence spans 156 residues: Small ribosomal subunit protein uS7 (156 aa).

It belongs to the universal ribosomal protein uS7 family. In terms of assembly, part of the 30S ribosomal subunit. Contacts proteins S9 and S11.

One of the primary rRNA binding proteins, it binds directly to 16S rRNA where it nucleates assembly of the head domain of the 30S subunit. Is located at the subunit interface close to the decoding center, probably blocks exit of the E-site tRNA. The sequence is that of Small ribosomal subunit protein uS7 from Limosilactobacillus reuteri (strain DSM 20016) (Lactobacillus reuteri).